The primary structure comprises 82 residues: MSVDLKQQLELADYLGALAVWCIFFGVLFILSVIFNFVCIKKDDDVTALERWGYKKNIDMKLGPHRRSMVARQIPQTVVADH.

The protein is Neuropeptide-like peptide 36 (nlp-36) of Caenorhabditis elegans.